A 272-amino-acid chain; its full sequence is Nitrogenase iron protein (272 aa).

8-15 (GKGGIGKS) is a binding site for ATP. A [4Fe-4S] cluster-binding site is contributed by cysteine 94. ADP-ribosylarginine; by dinitrogenase reductase ADP-ribosyltransferase is present on arginine 97. A [4Fe-4S] cluster-binding site is contributed by cysteine 129.

Belongs to the NifH/BchL/ChlL family. As to quaternary structure, homodimer. It depends on [4Fe-4S] cluster as a cofactor. Post-translationally, the reversible ADP-ribosylation of Arg-97 inactivates the nitrogenase reductase and regulates nitrogenase activity.

It catalyses the reaction N2 + 8 reduced [2Fe-2S]-[ferredoxin] + 16 ATP + 16 H2O = H2 + 8 oxidized [2Fe-2S]-[ferredoxin] + 2 NH4(+) + 16 ADP + 16 phosphate + 6 H(+). Functionally, the key enzymatic reactions in nitrogen fixation are catalyzed by the nitrogenase complex, which has 2 components: the iron protein and the molybdenum-iron protein. This is Nitrogenase iron protein from Desulforamulus reducens (strain ATCC BAA-1160 / DSM 100696 / MI-1) (Desulfotomaculum reducens).